An 820-amino-acid chain; its full sequence is Cation/H(+) antiporter 17 (820 aa).

The next 12 helical transmembrane spans lie at 30-50, 58-75, 90-110, 124-144, 159-179, 192-212, 222-242, 276-296, 313-333, 342-362, 374-394, and 404-424; these read LPLL…LAFL, RVIA…SALG, LTVL…LVGL, ALSI…GTSF, FLVF…ARIL, IALS…ALAV, LTSL…IFVV, FVTD…GVIF, LVSG…TNVA, GLLV…TVLV, LALG…LNIG, and IFAI…PLVL. Phosphoserine is present on residues serine 817 and serine 819.

Belongs to the monovalent cation:proton antiporter 2 (CPA2) transporter (TC 2.A.37) family. CHX (TC 2.A.37.4) subfamily. Predominantly expressed in epidermal and cortical cells of mature roots but also barely detected in leaves.

It localises to the membrane. Operates as a K(+)/H(+) antiporter that controls K(+) acquisition and homeostasis. The chain is Cation/H(+) antiporter 17 (CHX17) from Arabidopsis thaliana (Mouse-ear cress).